The sequence spans 459 residues: V-type ATP synthase beta chain (459 aa).

The protein belongs to the ATPase alpha/beta chains family.

Produces ATP from ADP in the presence of a proton gradient across the membrane. The V-type beta chain is a regulatory subunit. This chain is V-type ATP synthase beta chain, found in Clostridium botulinum (strain Alaska E43 / Type E3).